A 125-amino-acid chain; its full sequence is Fluoride-specific ion channel FluC (125 aa).

4 helical membrane passes run 5–25 (IFLV…VSLL), 33–53 (IFPL…GILV), 66–86 (VKIF…SFSL), and 100–120 (LVLY…LGYI). Na(+) is bound by residues G76 and T79.

The protein belongs to the fluoride channel Fluc/FEX (TC 1.A.43) family.

It is found in the cell inner membrane. The catalysed reaction is fluoride(in) = fluoride(out). Na(+) is not transported, but it plays an essential structural role and its presence is essential for fluoride channel function. Its function is as follows. Fluoride-specific ion channel. Important for reducing fluoride concentration in the cell, thus reducing its toxicity. This chain is Fluoride-specific ion channel FluC, found in Azobacteroides pseudotrichonymphae genomovar. CFP2.